The following is a 94-amino-acid chain: Small ribosomal subunit protein uS19 (94 aa).

The protein belongs to the universal ribosomal protein uS19 family.

In terms of biological role, protein S19 forms a complex with S13 that binds strongly to the 16S ribosomal RNA. This chain is Small ribosomal subunit protein uS19, found in Wolbachia pipientis wMel.